The following is a 422-amino-acid chain: UPF0597 protein Kole_0595 (422 aa).

It belongs to the UPF0597 family.

The polypeptide is UPF0597 protein Kole_0595 (Kosmotoga olearia (strain ATCC BAA-1733 / DSM 21960 / TBF 19.5.1)).